A 142-amino-acid chain; its full sequence is Large ribosomal subunit protein uL22 (142 aa).

Residues R122 to A142 are disordered.

Belongs to the universal ribosomal protein uL22 family. In terms of assembly, part of the 50S ribosomal subunit.

Its function is as follows. This protein binds specifically to 23S rRNA; its binding is stimulated by other ribosomal proteins, e.g. L4, L17, and L20. It is important during the early stages of 50S assembly. It makes multiple contacts with different domains of the 23S rRNA in the assembled 50S subunit and ribosome. In terms of biological role, the globular domain of the protein is located near the polypeptide exit tunnel on the outside of the subunit, while an extended beta-hairpin is found that lines the wall of the exit tunnel in the center of the 70S ribosome. This Gluconobacter oxydans (strain 621H) (Gluconobacter suboxydans) protein is Large ribosomal subunit protein uL22.